A 143-amino-acid polypeptide reads, in one-letter code: Heat shock protein Hsp-16.41 (143 aa).

A sHSP domain is found at 35–140; it reads HNSFNFSDNI…SSRSIPINFV (106 aa).

Belongs to the small heat shock protein (HSP20) family.

The sequence is that of Heat shock protein Hsp-16.41 (hsp-16.41) from Caenorhabditis elegans.